The sequence spans 535 residues: Nuclear/nucleolar GTPase 2 (535 aa).

Residues 1–42 form a disordered region; it reads MAKKKERAVNVSGKPRHSLDVNRANDKKGAGGGAGGGGGGRS. Residues 17–29 are compositionally biased toward basic and acidic residues; the sequence is HSLDVNRANDKKG. Positions 30–41 are enriched in gly residues; that stretch reads AGGGAGGGGGGR. The CP-type G domain occupies 213–374; that stretch reads WGELYKVIDS…LIDCPGVVYQ (162 aa). The segment at 261–264 is G4; the sequence is NKCD. The segment at 290-292 is G5; it reads SIN. The tract at residues 323–330 is G1; sequence GYPNVGKS. A G2 region spans residues 349–353; that stretch reads GETKV. The G3 stretch occupies residues 367-370; that stretch reads DCPG. The tract at residues 464–494 is disordered; that stretch reads FFVPPPQQGEDSPSETAEPVEKSDEEGVSSD.

This sequence belongs to the TRAFAC class YlqF/YawG GTPase family. RsgA subfamily. Interacts (via N-terminus) with the 60S ribosomal proteins RPL10A. This interaction is enhanced by the addition of GTP. As to expression, expressed in roots, shoot apical meristem, leaves, leaf sheaths and flowers.

It localises to the nucleus. Its subcellular location is the nucleolus. With respect to regulation, the GTPase activity is stimulated in the presence of ribosomes, particularly of the 60S subunit. GTPase involved in pre-60S ribosomal subunit maturation. This is Nuclear/nucleolar GTPase 2 from Oryza sativa subsp. japonica (Rice).